The primary structure comprises 248 residues: UPF0736 protein BCE_1296 (248 aa).

Belongs to the UPF0736 family.

The chain is UPF0736 protein BCE_1296 from Bacillus cereus (strain ATCC 10987 / NRS 248).